A 1503-amino-acid polypeptide reads, in one-letter code: Mitogen-activated protein kinase-binding protein 1 (1503 aa).

12 WD repeats span residues 89 to 130 (SSRK…QVAE), 133 to 174 (EHKY…VVAS), 176 to 214 (KVSSRVTAVSFSEDCSYFVTAGNRHIKFWYLDDSKTSKV), 271 to 310 (VELRTTVAHCISVTQEYIFCGCADGTVRLFNPSNLHFLST), 337 to 376 (ARYPDTIALTFDPTNQWLSCVYNDHSIYVWDVRDPKKVGK), 382 to 431 (YHSS…VHGS), 472 to 511 (DPRVGIRSVCISPNGQHLASGDRMGTLRIHELQSLSEMLK), 514 to 556 (AHDS…SLQQ), 560 to 601 (EHSS…EGVQ), 609 to 648 (VRKTTLYDMDVEPSWKYTAIGCQDRNIRIFNISSGKQKKL), 654 to 693 (GEDGTLIKVQTDPSGIYIATSCSDKNLSIFDFSSGECVAT), and 696 to 735 (GHSEIVTGMKFSNDCKHLISVSGDSCIFVWRLSSEMTISM). 3 disordered regions span residues 745–817 (RQRG…SSPA), 874–917 (LAPS…RLQT), and 951–1176 (VYPE…SWAS). A compositionally biased stretch (acidic residues) spans 784 to 796 (KEGEDEGTEEEEL). Composition is skewed to polar residues over residues 905-917 (CVSQNERAPRLQT) and 957-972 (DSPTMDTSAFQVQAPT). The segment covering 1028-1043 (DLEEPAEGDEDEEEEG) has biased composition (acidic residues). The segment covering 1058 to 1068 (PDQEQFLKQHF) has biased composition (basic and acidic residues). The span at 1089 to 1129 (SQSISSRFLLQVQTSPLREPSLSSSGLALTSRPDQVSQVSG) shows a compositional bias: polar residues. At Ser-1193 the chain carries Phosphoserine. 2 disordered regions span residues 1217-1238 (QGSLGSLPQAGGCSSQPHSYQN) and 1369-1391 (QGPESLQPLSPEKTRNPVESSRP).

Can form homodimers (via C-terminus). Interacts (via C-terminus) with WDR62 (via C-terminus). Interacts with MAPK9. Interacts (via N-terminus) with NOD2; the interaction is enhanced in presence of muramyl dipeptide (MDP). Interacts with MAPK10. As to expression, ubiquitously expressed. Highest expression observed in brain.

It is found in the cytoplasm. Its subcellular location is the nucleus. The protein localises to the cytoskeleton. It localises to the spindle pole. Its function is as follows. Negative regulator of NOD2 function. It down-regulates NOD2-induced processes such as activation of NF-kappa-B signaling, IL8 secretion and antibacterial response. Involved in JNK signaling pathway. The sequence is that of Mitogen-activated protein kinase-binding protein 1 (Mapkbp1) from Mus musculus (Mouse).